Here is a 365-residue protein sequence, read N- to C-terminus: MVRGARKAIAVGVAVAVACGLQKHLNFVPGPRHAAPVAAAAASMMMAPAAFADEIGDAAKKLGDASYSFAKEVDWNNGIFLQAPGKFQPLEALKAIDKMIEMGAAADPKLLKDAAEAHHKAIGSISGPNGVTSRADWDAVNAAIGRVVASVPKAKVMAVYDSVTAITDPGVPAYMKSLVNGPDAEKAYQGFLEFKDVVEKNQVATASAPAVVPSGDKIGEAAKALSDASYPFIKDIDWLSDIYLKPLPGKTAPETLKAIDKMIVMGAKMDGNLLKAAAEAHHKAIGSIDATGVTSAADYEAVNAAIGRLVASVPKTTVMDVYNSMAGVVDSSVPNNLFSKVNPLDAVAAAKGFYTFKDVVEASQR.

The transit peptide at 1 to 52 (MVRGARKAIAVGVAVAVACGLQKHLNFVPGPRHAAPVAAAAASMMMAPAAFA) directs the protein to the chloroplast. A run of 2 repeats spans residues 53–215 (DEIG…VPSG) and 216–365 (DKIG…ASQR).

Monomer.

It localises to the plastid. The protein localises to the chloroplast. In terms of biological role, water-soluble antenna for capture of solar energy in the blue-green range. Peridinin is an asymmetric carotenoid. This is Peridinin-chlorophyll a-binding protein, chloroplastic from Symbiodinium sp. (Dinoflagellate).